A 254-amino-acid polypeptide reads, in one-letter code: Receptor expression-enhancing protein 2 (254 aa).

2 helical membrane passes run Met-1–Tyr-21 and Tyr-35–Thr-55. Position 152 is a phosphoserine (Ser-152). Residues Leu-194–Ala-254 form a disordered region. Basic and acidic residues predominate over residues Pro-205 to Pro-219.

This sequence belongs to the DP1 family. In terms of assembly, interacts with odorant receptor proteins.

Its subcellular location is the membrane. Functionally, required for endoplasmic reticulum (ER) network formation, shaping and remodeling. May enhance the cell surface expression of odorant receptors. This chain is Receptor expression-enhancing protein 2 (Reep2), found in Mus musculus (Mouse).